A 145-amino-acid chain; its full sequence is UPF0260 protein VC_1058 (145 aa).

It belongs to the UPF0260 family.

In Vibrio cholerae serotype O1 (strain ATCC 39315 / El Tor Inaba N16961), this protein is UPF0260 protein VC_1058.